A 312-amino-acid chain; its full sequence is RNA pseudouridylate synthase domain-containing protein 1 (312 aa).

M1 carries the N-acetylmethionine modification. Residue D67 is part of the active site. The interval A256–P298 is disordered. Positions P279–P289 are enriched in pro residues.

Belongs to the pseudouridine synthase RluA family.

This chain is RNA pseudouridylate synthase domain-containing protein 1 (RPUSD1), found in Homo sapiens (Human).